Here is a 261-residue protein sequence, read N- to C-terminus: Na(+)-translocating NADH-quinone reductase subunit C (261 aa).

Residues 12–32 (LGVVVGLSLVCSIIVSTAAVG) traverse the membrane as a helical segment. Thr-229 bears the FMN phosphoryl threonine mark.

As to quaternary structure, composed of six subunits; NqrA, NqrB, NqrC, NqrD, NqrE and NqrF. The cofactor is FMN.

It localises to the cell inner membrane. It catalyses the reaction a ubiquinone + n Na(+)(in) + NADH + H(+) = a ubiquinol + n Na(+)(out) + NAD(+). NQR complex catalyzes the reduction of ubiquinone-1 to ubiquinol by two successive reactions, coupled with the transport of Na(+) ions from the cytoplasm to the periplasm. NqrA to NqrE are probably involved in the second step, the conversion of ubisemiquinone to ubiquinol. The polypeptide is Na(+)-translocating NADH-quinone reductase subunit C (Vibrio campbellii (strain ATCC BAA-1116)).